Consider the following 94-residue polypeptide: Co-chaperonin GroES (94 aa).

The protein belongs to the GroES chaperonin family. Heptamer of 7 subunits arranged in a ring. Interacts with the chaperonin GroEL.

It localises to the cytoplasm. Functionally, together with the chaperonin GroEL, plays an essential role in assisting protein folding. The GroEL-GroES system forms a nano-cage that allows encapsulation of the non-native substrate proteins and provides a physical environment optimized to promote and accelerate protein folding. GroES binds to the apical surface of the GroEL ring, thereby capping the opening of the GroEL channel. This is Co-chaperonin GroES from Streptococcus agalactiae serotype III (strain NEM316).